The primary structure comprises 142 residues: Protein tost-1 (142 aa).

The tract at residues 97-123 (KVFEEEDKENAPTKKAVLKPSSTDEKK) is disordered.

As to quaternary structure, component of the tost-1 variant of the PETISCO complex (also called the pid-3, erh-2, tofu-6, and ife-3 small RNA complex) containing at least tost-1, tofu-6, ife-3, pid-3, and erh-2, which plays an essential role in embryogenesis. Within the complex interacts with erh-2. Within the complex interacts with pid-3 and tofu-6. In contrast to the pid-1 variant of the PETISCO complex, the tost-1 variant of the PETISCO complex plays a minor role in the biogenesis of a class of 21 nucleotide PIWI-interacting RNAs (piRNAs) that possess a uracil residue at the 5'-end (also called 21U-RNAs). Expressed in the germline.

It localises to the cytoplasm. The protein resides in the nucleus. Functionally, component of the tost-1 variant of the PETISCO complex which plays an essential role in embryogenesis. Within the complex acts as an adapter which binds to the complex via erh-2. Does not seem to play a role in the biogenesis of a class of 21 nucleotide PIWI-interacting RNAs (piRNAs) that possess a uracil residue at the 5'-end (also called 21U-RNAs). May inhibit 21U-RNA accumulation. Required for chromosome segregation and cell division in early embryos. The sequence is that of Protein tost-1 from Caenorhabditis elegans.